The chain runs to 112 residues: UPF0102 protein Spea_0251 (112 aa).

It belongs to the UPF0102 family.

This chain is UPF0102 protein Spea_0251, found in Shewanella pealeana (strain ATCC 700345 / ANG-SQ1).